Reading from the N-terminus, the 48-residue chain is Protein 1.8 (48 aa).

The chain is Protein 1.8 from Escherichia coli (Bacteriophage T7).